A 139-amino-acid chain; its full sequence is Diacylglycerol acyltransferase/mycolyltransferase Ag85A (139 aa).

Catalysis depends on Ser10, which acts as the Nucleophile. Positions 10 and 38 each coordinate substrate. Glu114 is a catalytic residue. Residues 116 to 119 (FVRT) and Lys123 contribute to the substrate site.

Belongs to the mycobacterial A85 antigen family. Homodimer.

It localises to the secreted. The protein resides in the cell wall. It is found in the cytoplasm. It catalyses the reaction an acyl-CoA + a 1,2-diacyl-sn-glycerol = a triacyl-sn-glycerol + CoA. The catalysed reaction is 2 alpha,alpha'-trehalose 6-mycolate = alpha,alpha'-trehalose 6,6'-bismycolate + alpha,alpha-trehalose. The antigen 85 proteins (FbpA, FbpB, FbpC) are responsible for the high affinity of mycobacteria for fibronectin, a large adhesive glycoprotein, which facilitates the attachment of M.tuberculosis to murine alveolar macrophages (AMs). They also help to maintain the integrity of the cell wall by catalyzing the transfer of mycolic acids to cell wall arabinogalactan, and through the synthesis of alpha,alpha-trehalose dimycolate (TDM, cord factor). They catalyze the transfer of a mycoloyl residue from one molecule of alpha,alpha-trehalose monomycolate (TMM) to another TMM, leading to the formation of TDM. FbpA mediates triacylglycerol (TAG) formation with long-chain acyl-CoA as the acyl donor and 1,2-dipalmitoyl-sn-glycerol (1,2-dipalmitin) as the acyl acceptor. It has a preference for C26:0-CoA over C18:1-CoA. This Mycobacterium marinum protein is Diacylglycerol acyltransferase/mycolyltransferase Ag85A (fbpA).